The following is a 207-amino-acid chain: MRLFVGLGNPGTKYQDNRHNIGFMVIDEIARRHGFSPWRRRFQGETSDGALDGERITLLKPLTYMNESGRAVQEAASFYKIGQGEVAVFHDEIELPPAKVRVKVGGGIAGHNGLRSISAHIGNDYLRVRLGVGHPGVKEMVHGHVLGDFAKSERPWVAALCEIAADNAGLIAKGKDASFANKVHLAMQAKGFLDEDKKKSGDNKVAK.

Tyr14 provides a ligand contact to tRNA. His19 (proton acceptor) is an active-site residue. TRNA is bound by residues Tyr64, Asn66, and Asn112.

Belongs to the PTH family. As to quaternary structure, monomer.

Its subcellular location is the cytoplasm. It carries out the reaction an N-acyl-L-alpha-aminoacyl-tRNA + H2O = an N-acyl-L-amino acid + a tRNA + H(+). Functionally, hydrolyzes ribosome-free peptidyl-tRNAs (with 1 or more amino acids incorporated), which drop off the ribosome during protein synthesis, or as a result of ribosome stalling. In terms of biological role, catalyzes the release of premature peptidyl moieties from peptidyl-tRNA molecules trapped in stalled 50S ribosomal subunits, and thus maintains levels of free tRNAs and 50S ribosomes. The sequence is that of Peptidyl-tRNA hydrolase from Rhodopseudomonas palustris (strain HaA2).